The following is a 216-amino-acid chain: Large ribosomal subunit protein uL3 (216 aa).

Gln157 is subject to N5-methylglutamine.

It belongs to the universal ribosomal protein uL3 family. Part of the 50S ribosomal subunit. Forms a cluster with proteins L14 and L19. Methylated by PrmB.

One of the primary rRNA binding proteins, it binds directly near the 3'-end of the 23S rRNA, where it nucleates assembly of the 50S subunit. The polypeptide is Large ribosomal subunit protein uL3 (Stenotrophomonas maltophilia (strain R551-3)).